An 89-amino-acid polypeptide reads, in one-letter code: Small ribosomal subunit protein uS15 (89 aa).

Belongs to the universal ribosomal protein uS15 family. Part of the 30S ribosomal subunit. Forms a bridge to the 50S subunit in the 70S ribosome, contacting the 23S rRNA.

In terms of biological role, one of the primary rRNA binding proteins, it binds directly to 16S rRNA where it helps nucleate assembly of the platform of the 30S subunit by binding and bridging several RNA helices of the 16S rRNA. Functionally, forms an intersubunit bridge (bridge B4) with the 23S rRNA of the 50S subunit in the ribosome. The sequence is that of Small ribosomal subunit protein uS15 from Polynucleobacter asymbioticus (strain DSM 18221 / CIP 109841 / QLW-P1DMWA-1) (Polynucleobacter necessarius subsp. asymbioticus).